Consider the following 367-residue polypeptide: Quinolinate synthase (367 aa).

2 residues coordinate iminosuccinate: His-64 and Ser-82. Residue Cys-127 participates in [4Fe-4S] cluster binding. Iminosuccinate is bound by residues 153–155 (YVN) and Ser-170. Cys-216 contacts [4Fe-4S] cluster. Iminosuccinate is bound by residues 242-244 (HPE) and Thr-259. Residue Cys-302 coordinates [4Fe-4S] cluster.

Belongs to the quinolinate synthase family. Type 2 subfamily. It depends on [4Fe-4S] cluster as a cofactor.

Its subcellular location is the cytoplasm. The enzyme catalyses iminosuccinate + dihydroxyacetone phosphate = quinolinate + phosphate + 2 H2O + H(+). Its pathway is cofactor biosynthesis; NAD(+) biosynthesis; quinolinate from iminoaspartate: step 1/1. In terms of biological role, catalyzes the condensation of iminoaspartate with dihydroxyacetone phosphate to form quinolinate. The sequence is that of Quinolinate synthase from Caulobacter vibrioides (strain ATCC 19089 / CIP 103742 / CB 15) (Caulobacter crescentus).